A 265-amino-acid chain; its full sequence is Phosphatidylglycerol--prolipoprotein diacylglyceryl transferase (265 aa).

7 helical membrane passes run 11–31 (AVSI…FGFI), 56–76 (MVTW…ILFY), 91–111 (IWHG…AVWL), 120–140 (FLSV…FGRI), 173–193 (QLYE…WFSG), 198–218 (VGAV…AVEF), and 233–253 (WLTM…WLLL). Arg-139 contacts a 1,2-diacyl-sn-glycero-3-phospho-(1'-sn-glycerol).

Belongs to the Lgt family.

It localises to the cell inner membrane. The enzyme catalyses L-cysteinyl-[prolipoprotein] + a 1,2-diacyl-sn-glycero-3-phospho-(1'-sn-glycerol) = an S-1,2-diacyl-sn-glyceryl-L-cysteinyl-[prolipoprotein] + sn-glycerol 1-phosphate + H(+). It functions in the pathway protein modification; lipoprotein biosynthesis (diacylglyceryl transfer). Catalyzes the transfer of the diacylglyceryl group from phosphatidylglycerol to the sulfhydryl group of the N-terminal cysteine of a prolipoprotein, the first step in the formation of mature lipoproteins. This Nitratidesulfovibrio vulgaris (strain DSM 19637 / Miyazaki F) (Desulfovibrio vulgaris) protein is Phosphatidylglycerol--prolipoprotein diacylglyceryl transferase.